Reading from the N-terminus, the 97-residue chain is Phosphoribosyl-ATP pyrophosphatase (97 aa).

Belongs to the PRA-PH family.

It is found in the cytoplasm. It catalyses the reaction 1-(5-phospho-beta-D-ribosyl)-ATP + H2O = 1-(5-phospho-beta-D-ribosyl)-5'-AMP + diphosphate + H(+). Its pathway is amino-acid biosynthesis; L-histidine biosynthesis; L-histidine from 5-phospho-alpha-D-ribose 1-diphosphate: step 2/9. The polypeptide is Phosphoribosyl-ATP pyrophosphatase (Methanoculleus marisnigri (strain ATCC 35101 / DSM 1498 / JR1)).